An 884-amino-acid chain; its full sequence is Alanine--tRNA ligase (884 aa).

4 residues coordinate Zn(2+): His-570, His-574, Cys-676, and His-680.

The protein belongs to the class-II aminoacyl-tRNA synthetase family. It depends on Zn(2+) as a cofactor.

It is found in the cytoplasm. It carries out the reaction tRNA(Ala) + L-alanine + ATP = L-alanyl-tRNA(Ala) + AMP + diphosphate. Functionally, catalyzes the attachment of alanine to tRNA(Ala) in a two-step reaction: alanine is first activated by ATP to form Ala-AMP and then transferred to the acceptor end of tRNA(Ala). Also edits incorrectly charged Ser-tRNA(Ala) and Gly-tRNA(Ala) via its editing domain. In Lawsonia intracellularis (strain PHE/MN1-00), this protein is Alanine--tRNA ligase.